The chain runs to 179 residues: Putative invertase inhibitor (179 aa).

Positions 1 to 23 are cleaved as a signal peptide; the sequence is MKLSFSLCIFFFNLLLLLQAVIS. 2 disulfide bridges follow: cysteine 31/cysteine 46 and cysteine 102/cysteine 142.

It belongs to the PMEI family. As to quaternary structure, monomer. Post-translationally, not glycosylated. Expressed in pollen (at protein level). Expressed in stem, but not leaves (at protein level). Expressed in pollen.

The protein resides in the secreted. It localises to the cell wall. Its subcellular location is the endoplasmic reticulum. Its function is as follows. Invertase inhibitor. The chain is Putative invertase inhibitor from Platanus acerifolia (London plane tree).